Consider the following 908-residue polypeptide: Protein translocase subunit SecA (908 aa).

ATP is bound by residues Q90, 108 to 112 (GEGKT), and D503. The segment covering 846-864 (AAAAEAPVAPAPQPAAAAP) has biased composition (low complexity). Residues 846 to 884 (AAAAEAPVAPAPQPAAAAPQPTPELVGAEAGEPDPAAWG) form a disordered region. Residues C892, C894, C903, and H904 each contribute to the Zn(2+) site.

Belongs to the SecA family. As to quaternary structure, monomer and homodimer. Part of the essential Sec protein translocation apparatus which comprises SecA, SecYEG and auxiliary proteins SecDF-YajC and YidC. Zn(2+) serves as cofactor.

It localises to the cell inner membrane. The protein localises to the cytoplasm. The catalysed reaction is ATP + H2O + cellular proteinSide 1 = ADP + phosphate + cellular proteinSide 2.. Its function is as follows. Part of the Sec protein translocase complex. Interacts with the SecYEG preprotein conducting channel. Has a central role in coupling the hydrolysis of ATP to the transfer of proteins into and across the cell membrane, serving both as a receptor for the preprotein-SecB complex and as an ATP-driven molecular motor driving the stepwise translocation of polypeptide chains across the membrane. This is Protein translocase subunit SecA from Cereibacter sphaeroides (strain KD131 / KCTC 12085) (Rhodobacter sphaeroides).